The primary structure comprises 348 residues: Phospho-N-acetylmuramoyl-pentapeptide-transferase (348 aa).

The next 10 helical transmembrane spans lie at 11–31 (SLILFLVTVMGFAFLVGIFLG), 67–87 (TAGGVLFFLVLLMSIFFLLPL), 92–112 (TWLFVFSIVSWGSLGWYDDIV), 128–148 (FIVQLLLSAVTVITVFFIDKE), 163–183 (IFLGSSILAKLFCFSLAMLAI), 198–218 (GLATGITCMSSFGLLIVAIMS), 222–242 (PLAYDVSIVLATLVGISLAFL), 251–271 (VFMGDTGSLLIGGILASCAVM), 276–296 (LFLIFLGGVFVAEAGSVILQV), and 326–346 (VVARFWMAGLLCTVLGIVAAL).

It belongs to the glycosyltransferase 4 family. MraY subfamily. The cofactor is Mg(2+).

Its subcellular location is the cell inner membrane. The enzyme catalyses UDP-N-acetyl-alpha-D-muramoyl-L-alanyl-gamma-D-glutamyl-meso-2,6-diaminopimeloyl-D-alanyl-D-alanine + di-trans,octa-cis-undecaprenyl phosphate = di-trans,octa-cis-undecaprenyl diphospho-N-acetyl-alpha-D-muramoyl-L-alanyl-D-glutamyl-meso-2,6-diaminopimeloyl-D-alanyl-D-alanine + UMP. It participates in cell wall biogenesis; peptidoglycan biosynthesis. Functionally, catalyzes the initial step of the lipid cycle reactions in the biosynthesis of the cell wall peptidoglycan: transfers peptidoglycan precursor phospho-MurNAc-pentapeptide from UDP-MurNAc-pentapeptide onto the lipid carrier undecaprenyl phosphate, yielding undecaprenyl-pyrophosphoryl-MurNAc-pentapeptide, known as lipid I. This is Phospho-N-acetylmuramoyl-pentapeptide-transferase from Chlamydia felis (strain Fe/C-56) (Chlamydophila felis).